Reading from the N-terminus, the 188-residue chain is Phosphoribosylglycinamide formyltransferase (188 aa).

Residue 12–14 (GSN) coordinates N(1)-(5-phospho-beta-D-ribosyl)glycinamide. (6R)-10-formyltetrahydrofolate-binding positions include K66, 91-94 (MRLI), and N108. Residue H110 is the Proton donor of the active site.

It belongs to the GART family.

The catalysed reaction is N(1)-(5-phospho-beta-D-ribosyl)glycinamide + (6R)-10-formyltetrahydrofolate = N(2)-formyl-N(1)-(5-phospho-beta-D-ribosyl)glycinamide + (6S)-5,6,7,8-tetrahydrofolate + H(+). It participates in purine metabolism; IMP biosynthesis via de novo pathway; N(2)-formyl-N(1)-(5-phospho-D-ribosyl)glycinamide from N(1)-(5-phospho-D-ribosyl)glycinamide (10-formyl THF route): step 1/1. Functionally, catalyzes the transfer of a formyl group from 10-formyltetrahydrofolate to 5-phospho-ribosyl-glycinamide (GAR), producing 5-phospho-ribosyl-N-formylglycinamide (FGAR) and tetrahydrofolate. This Staphylococcus aureus (strain COL) protein is Phosphoribosylglycinamide formyltransferase.